A 460-amino-acid polypeptide reads, in one-letter code: UDP-N-acetylmuramoylalanine--D-glutamate ligase (460 aa).

115–121 (GTDGKTT) provides a ligand contact to ATP.

The protein belongs to the MurCDEF family.

It is found in the cytoplasm. The enzyme catalyses UDP-N-acetyl-alpha-D-muramoyl-L-alanine + D-glutamate + ATP = UDP-N-acetyl-alpha-D-muramoyl-L-alanyl-D-glutamate + ADP + phosphate + H(+). The protein operates within cell wall biogenesis; peptidoglycan biosynthesis. Functionally, cell wall formation. Catalyzes the addition of glutamate to the nucleotide precursor UDP-N-acetylmuramoyl-L-alanine (UMA). This Chlorobium luteolum (strain DSM 273 / BCRC 81028 / 2530) (Pelodictyon luteolum) protein is UDP-N-acetylmuramoylalanine--D-glutamate ligase.